The following is a 205-amino-acid chain: Small ribosomal subunit protein uS4 (205 aa).

One can recognise an S4 RNA-binding domain in the interval 95 to 158 (SRLDNIVYRM…TKSPLVKNFI (64 aa)).

Belongs to the universal ribosomal protein uS4 family. As to quaternary structure, part of the 30S ribosomal subunit. Contacts protein S5. The interaction surface between S4 and S5 is involved in control of translational fidelity.

In terms of biological role, one of the primary rRNA binding proteins, it binds directly to 16S rRNA where it nucleates assembly of the body of the 30S subunit. With S5 and S12 plays an important role in translational accuracy. The polypeptide is Small ribosomal subunit protein uS4 (Mycoplasma genitalium (strain ATCC 33530 / DSM 19775 / NCTC 10195 / G37) (Mycoplasmoides genitalium)).